The sequence spans 304 residues: UDP-3-O-acyl-N-acetylglucosamine deacetylase (304 aa).

His78, His237, and Asp241 together coordinate Zn(2+). His264 functions as the Proton donor in the catalytic mechanism.

This sequence belongs to the LpxC family. It depends on Zn(2+) as a cofactor.

The catalysed reaction is a UDP-3-O-[(3R)-3-hydroxyacyl]-N-acetyl-alpha-D-glucosamine + H2O = a UDP-3-O-[(3R)-3-hydroxyacyl]-alpha-D-glucosamine + acetate. It participates in glycolipid biosynthesis; lipid IV(A) biosynthesis; lipid IV(A) from (3R)-3-hydroxytetradecanoyl-[acyl-carrier-protein] and UDP-N-acetyl-alpha-D-glucosamine: step 2/6. Its function is as follows. Catalyzes the hydrolysis of UDP-3-O-myristoyl-N-acetylglucosamine to form UDP-3-O-myristoylglucosamine and acetate, the committed step in lipid A biosynthesis. The chain is UDP-3-O-acyl-N-acetylglucosamine deacetylase from Nitrosococcus oceani (strain ATCC 19707 / BCRC 17464 / JCM 30415 / NCIMB 11848 / C-107).